The following is a 262-amino-acid chain: ATP synthase subunit a (262 aa).

6 helical membrane-spanning segments follow: residues 24–44, 84–104, 129–149, 165–185, 194–214, and 228–248; these read AVHL…LFVF, VIAP…AIDL, DISA…FYTV, PFNH…TLLA, LFGN…MYMA, and LVWA…FMML.

This sequence belongs to the ATPase A chain family. F-type ATPases have 2 components, CF(1) - the catalytic core - and CF(0) - the membrane proton channel. CF(1) has five subunits: alpha(3), beta(3), gamma(1), delta(1), epsilon(1). CF(0) has three main subunits: a(1), b(2) and c(9-12). The alpha and beta chains form an alternating ring which encloses part of the gamma chain. CF(1) is attached to CF(0) by a central stalk formed by the gamma and epsilon chains, while a peripheral stalk is formed by the delta and b chains.

It is found in the cell inner membrane. Its function is as follows. Key component of the proton channel; it plays a direct role in the translocation of protons across the membrane. The sequence is that of ATP synthase subunit a from Actinobacillus pleuropneumoniae serotype 7 (strain AP76).